Reading from the N-terminus, the 541-residue chain is Zinc finger protein 503 (541 aa).

A compositionally biased stretch (polar residues) spans 1 to 18 (MSNSPLGSGSRISHFTTE). 2 disordered regions span residues 1–49 (MSNS…QAGR) and 97–255 (TCSQ…SSSV). The segment covering 137 to 157 (AEDKSSFKPYSKHPDKKDQSA) has biased composition (basic and acidic residues). A compositionally biased stretch (low complexity) spans 236-255 (SLSAAPSPTPASSSSSSSSV). A C2H2-type zinc finger spans residues 411–439 (HVCNWVSATGPCDKRFSSSEELLGHLRTH). Positions 474–511 (GASPGPLTLRSPHHHPLGLSSSRYHPYSKSPLPSGGAP) are disordered.

The protein belongs to the Elbow/Noc family.

The protein resides in the nucleus. In terms of biological role, may function as a transcriptional repressor. This Xenopus tropicalis (Western clawed frog) protein is Zinc finger protein 503 (znf503).